Reading from the N-terminus, the 749-residue chain is Disintegrin and metalloproteinase domain-containing protein 10 (749 aa).

An N-terminal signal peptide occupies residues 1–18; the sequence is MGLLRLVFLLSWAASAGG. The propeptide occupies 19 to 213; sequence LYGNPLNKYI…SGPVILRKKR (195 aa). Residues 19–673 are Extracellular-facing; the sequence is LYGNPLNKYI…NPELYENIAE (655 aa). Residues 170 to 177 carry the Cysteine switch motif; the sequence is GGCADSSV. Cys172 serves as a coordination point for Zn(2+). The Peptidase M12B domain occupies 220–457; sequence NTCQLFIQTD…KENSCFVESG (238 aa). Disulfide bonds link Cys222-Cys314, Cys345-Cys452, Cys400-Cys436, Cys461-Cys496, Cys472-Cys485, Cys474-Cys480, Cys484-Cys516, Cys504-Cys512, Cys511-Cys537, Cys525-Cys544, Cys531-Cys563, Cys556-Cys568, Cys573-Cys599, Cys581-Cys608, Cys583-Cys598, Cys595-Cys640, and Cys633-Cys646. N-linked (GlcNAc...) asparagine glycans are attached at residues Asn268 and Asn279. Zn(2+) is bound at residue His384. The active site involves Glu385. Zn(2+)-binding residues include His388 and His394. The N-linked (GlcNAc...) asparagine glycan is linked to Asn440. The Disintegrin domain occupies 458 to 552; sequence QPICGNGLVE…QCPPSEPREN (95 aa). A glycan (N-linked (GlcNAc...) asparagine) is linked at Asn552. A helical transmembrane segment spans residues 674–694; that stretch reads WIVAHWWAVLLMGIALIMLMA. The Cytoplasmic portion of the chain corresponds to 695–749; the sequence is GFIKICSVHTPSSNPKLPPPKPLPGTLKRRRPPQTTQQPSRQRPRENYQMGHMRH. Residues 705–749 are disordered; that stretch reads PSSNPKLPPPKPLPGTLKRRRPPQTTQQPSRQRPRENYQMGHMRH. Positions 709 to 716 match the SH3-binding motif; sequence PKLPPPKP. Thr720 carries the post-translational modification Phosphothreonine. Positions 723 to 729 match the SH3-binding motif; it reads RRRPPQT.

It depends on Zn(2+) as a cofactor. Post-translationally, the precursor is cleaved by furin and PCSK7.

It localises to the membrane. It catalyses the reaction Endopeptidase of broad specificity.. In terms of biological role, controls the proteolytic processing of Notch and mediates lateral inhibition during neurogenesis. The polypeptide is Disintegrin and metalloproteinase domain-containing protein 10 (adam10) (Xenopus laevis (African clawed frog)).